Here is a 445-residue protein sequence, read N- to C-terminus: Protein trichome berefringence-like 7 (445 aa).

The helical; Signal-anchor for type II membrane protein transmembrane segment at 69–89 threads the bilayer; sequence IIAGTIVSFLVIIAGGYLYVV. A GDS motif motif is present at residues 188–190; sequence GDS. A DCXHWCLPGXXDXWN motif motif is present at residues 418-432; sequence DCSHWCLPGVPDIWN.

It belongs to the PC-esterase family. TBL subfamily.

Its subcellular location is the membrane. Its function is as follows. May act as a bridging protein that binds pectin and other cell wall polysaccharides. Probably involved in maintaining esterification of pectins. May be involved in the specific O-acetylation of cell wall polymers. The chain is Protein trichome berefringence-like 7 (TBL7) from Arabidopsis thaliana (Mouse-ear cress).